The primary structure comprises 573 residues: Glutathione hydrolase 5 proenzyme (573 aa).

Topologically, residues 1–8 (MAWGHRAT) are cytoplasmic. The chain crosses the membrane as a helical; Signal-anchor for type II membrane protein span at residues 9-29 (VCLVLLGVGLGLVIVVLAAVL). Residues 30 to 573 (SPRQASCGPG…LRKAGKASGY (544 aa)) are Extracellular-facing. Residue Asn-98 is glycosylated (N-linked (GlcNAc...) asparagine). Residue Arg-110 participates in L-glutamate binding. 6 N-linked (GlcNAc...) asparagine glycosylation sites follow: Asn-185, Asn-204, Asn-277, Asn-303, Asn-347, and Asn-378. Thr-389 acts as the Nucleophile in catalysis. Residues Thr-407, Glu-428, and 454–455 (SS) each bind L-glutamate.

This sequence belongs to the gamma-glutamyltransferase family. Heterodimer composed of the light and heavy chains. The active site is located in the light chain. Post-translationally, cleaved by autocatalysis into a large and a small subunit. Glycosylated. As to expression, very low level of expression. Detected in spleen lymphocytes, medullary and paracortical thymic lymphocytes, lung interstitial cells, bronchial epithelium, proximal tubules in kidney, crypt cells in small intestine, neurons in brain stem and cerebral cortex and in Purkinje cells. In terms of tissue distribution, very low expression.

The protein resides in the membrane. It carries out the reaction glutathione + H2O = L-cysteinylglycine + L-glutamate. It catalyses the reaction an S-substituted glutathione + H2O = an S-substituted L-cysteinylglycine + L-glutamate. The catalysed reaction is leukotriene C4 + H2O = leukotriene D4 + L-glutamate. The enzyme catalyses S-[(2E,6E,10E)-geranylgeranyl]-L-glutathione + H2O = S-[(2E,6E,10E)-geranylgeranyl]-L-cysteinylglycine + L-glutamate. It carries out the reaction an N-terminal (5-L-glutamyl)-[peptide] + an alpha-amino acid = 5-L-glutamyl amino acid + an N-terminal L-alpha-aminoacyl-[peptide]. It functions in the pathway lipid metabolism; leukotriene D4 biosynthesis. The protein operates within sulfur metabolism; glutathione metabolism. Inhibited by serine-borate. Its function is as follows. Cleaves the gamma-glutamyl bond of extracellular glutathione tripeptide (gamma-Glu-Cys-Gly) and certain glutathione conjugates. Hydrolyzes glutathione releasing L-Glu and Cys-Gly dipeptide which is further metabolized to maintain extracellular cysteine levels but also to provide cysteine necessary for intracellular glutathione synthesis. Among glutathione-S-conjugates metabolizes leukotriene C4 (LTC4) and S-geranylgeranyl-glutathione (GGG), but is inactive toward gamma-glutamyl leucine. Converts extracellular LTC4 to LTD4 during acute inflammatory response. Acts as a negative regulator of GGG bioactivity. GGT5 (via GGG catabolism) and ABCC1 (via extracellular transport) establish GGG gradients within lymphoid tissues to position P2RY8-positive lymphocytes at germinal centers in lymphoid follicles and restrict their chemotactic transmigration from blood vessels to bone marrow parenchyma. The transpeptidation reaction, i.e. the transfer of gamma-glutamyl moiety to an acceptor molecule to yield a new gamma-glutamyl compound requires high concentration of dipeptide acceptor and is considered nonphysiological. The protein is Glutathione hydrolase 5 proenzyme (Ggt5) of Mus musculus (Mouse).